A 375-amino-acid polypeptide reads, in one-letter code: Esterase AN6793 (375 aa).

Residues 138–158 (RHPQPGLDPGHGHRHKRMPPL) are disordered.

This sequence belongs to the sidJ hydrolase family. Homodimer.

It participates in secondary metabolite biosynthesis. Its function is as follows. Esterase; part of a cluster that mediates the biosynthesis of a yet undetermined secondary metabolite. With the HR-PKS AN6791, produces a pathway intermediate compound with molecular weight 258. This is Esterase AN6793 from Emericella nidulans (strain FGSC A4 / ATCC 38163 / CBS 112.46 / NRRL 194 / M139) (Aspergillus nidulans).